The chain runs to 252 residues: Small ribosomal subunit protein uS2 (252 aa).

It belongs to the universal ribosomal protein uS2 family. Component of the small ribosomal subunit. Mature ribosomes consist of a small (40S) and a large (60S) subunit. The 40S subunit contains about 33 different proteins and 1 molecule of RNA (18S). The 60S subunit contains about 49 different proteins and 3 molecules of RNA (25S, 5.8S and 5S). Interacts with RPS21.

The protein localises to the cytoplasm. Its function is as follows. Required for the assembly and/or stability of the 40S ribosomal subunit. Required for the processing of the 20S rRNA-precursor to mature 18S rRNA in a late step of the maturation of 40S ribosomal subunits. The protein is Small ribosomal subunit protein uS2 of Encephalitozoon cuniculi (strain GB-M1) (Microsporidian parasite).